Reading from the N-terminus, the 396-residue chain is Ribosomal RNA large subunit methyltransferase I (396 aa).

In terms of domain architecture, PUA spans 2–81; it reads SVRLVLAKGR…ESIDIAFFSR (80 aa).

Belongs to the methyltransferase superfamily. RlmI family.

The protein localises to the cytoplasm. It catalyses the reaction cytidine(1962) in 23S rRNA + S-adenosyl-L-methionine = 5-methylcytidine(1962) in 23S rRNA + S-adenosyl-L-homocysteine + H(+). Its function is as follows. Specifically methylates the cytosine at position 1962 (m5C1962) of 23S rRNA. The protein is Ribosomal RNA large subunit methyltransferase I of Shigella flexneri.